The chain runs to 213 residues: Cell division protein SepF 2 (213 aa).

The tract at residues 16–89 is disordered; sequence EDDGYDGRGF…ASLAAESSRP (74 aa). Over residues 27–39 the composition is skewed to acidic residues; the sequence is PDDDFEPELDPEP.

This sequence belongs to the SepF family. In terms of assembly, homodimer. Interacts with FtsZ.

It localises to the cytoplasm. Functionally, cell division protein that is part of the divisome complex and is recruited early to the Z-ring. Probably stimulates Z-ring formation, perhaps through the cross-linking of FtsZ protofilaments. Its function overlaps with FtsA. This Streptomyces coelicolor (strain ATCC BAA-471 / A3(2) / M145) protein is Cell division protein SepF 2.